Here is a 226-residue protein sequence, read N- to C-terminus: Large ribosomal subunit protein uL1 (226 aa).

This sequence belongs to the universal ribosomal protein uL1 family. As to quaternary structure, part of the 50S ribosomal subunit.

In terms of biological role, binds directly to 23S rRNA. Probably involved in E site tRNA release. Its function is as follows. Protein L1 is also a translational repressor protein, it controls the translation of its operon by binding to its mRNA. The chain is Large ribosomal subunit protein uL1 from Korarchaeum cryptofilum (strain OPF8).